The sequence spans 641 residues: Chaperone protein DnaK 2 (641 aa).

Position 199 is a phosphothreonine; by autocatalysis (Thr-199). The span at 601 to 616 (MAQQQAQAQHAQSSQQ) shows a compositional bias: low complexity. The tract at residues 601-641 (MAQQQAQAQHAQSSQQTNDTTGQSSTDDDVFEAEFEEVKDK) is disordered. Residues 626-635 (TDDDVFEAEF) are compositionally biased toward acidic residues.

It belongs to the heat shock protein 70 family.

In terms of biological role, acts as a chaperone. The polypeptide is Chaperone protein DnaK 2 (Photobacterium profundum (strain SS9)).